Consider the following 175-residue polypeptide: Cell division protein SepF (175 aa).

Acidic residues predominate over residues Arg20 to Asp29. Residues Arg20–Thr88 are disordered. Basic and acidic residues-rich tracts occupy residues Ala30 to Ser47 and Arg54 to Ser73.

The protein belongs to the SepF family. Homodimer. Interacts with FtsZ.

Its subcellular location is the cytoplasm. Its function is as follows. Cell division protein that is part of the divisome complex and is recruited early to the Z-ring. Probably stimulates Z-ring formation, perhaps through the cross-linking of FtsZ protofilaments. Its function overlaps with FtsA. The protein is Cell division protein SepF of Acidothermus cellulolyticus (strain ATCC 43068 / DSM 8971 / 11B).